Here is a 360-residue protein sequence, read N- to C-terminus: A-type ATP synthase subunit C (360 aa).

It belongs to the V-ATPase V0D/AC39 subunit family. In terms of assembly, has multiple subunits, A(3), B(3), C, D, E, F, G, I and K(x); there may be a few other subunits as well.

The protein resides in the cell membrane. Component of the A-type ATP synthase that produces ATP from ADP in the presence of a proton gradient across the membrane. The chain is A-type ATP synthase subunit C from Methanosarcina mazei (strain ATCC BAA-159 / DSM 3647 / Goe1 / Go1 / JCM 11833 / OCM 88) (Methanosarcina frisia).